Reading from the N-terminus, the 1830-residue chain is Guanine nucleotide exchange factor SPIKE 1 (1830 aa).

N-acetylmethionine is present on Met1. The segment at 285–304 (NTGESASPSSPLAPSMTASS) is disordered. Residues 289–304 (SASPSSPLAPSMTASS) are compositionally biased toward low complexity. The region spanning 463–622 (FHCLYVYPVA…NIFKLRLRLC (160 aa)) is the C2 DOCK-type domain. Position 1051 is a phosphoserine (Ser1051). Phosphothreonine is present on Thr1079. A Phosphoserine modification is found at Ser1095. In terms of domain architecture, DOCKER spans 1379–1828 (MAFAPVPDLH…LSHYIPAILS (450 aa)).

It belongs to the DOCK family. In terms of assembly, homodimer. Component of SCAR/WAVE and ARP2/3 complexes. Interacts directly with ARAC4/ROP2, ARAC1/ROP3, ARAC5/ROP4, ARAC6/ROP5, ARAC8/ROP10, ARAC9/ROP8, SCAR1, SCAR2, SCAR3, SCAR4, ABI1, ABI2, ABI3 and ABI4. Binds to the inactive GDP-bound form of ARAC3/ROP6. In terms of tissue distribution, expressed ubiquitously, in roots and aerial organs.

The protein localises to the cytoplasm. It localises to the endoplasmic reticulum membrane. The protein resides in the nucleus. Guanine nucleotide exchange factor (GEF) for Rho and Rac. GEF proteins activate small GTPases by exchanging bound GDP for free GTP. Controls actin polymerization via the two heteromeric complexes WAVE and actin-related protein (ARP) 2/3. Involved in cytoskeletal reorganization required for cell shape (e.g. trichome and cotyledon) control and tissue development. Prevents cortical microtubules organization into parallel arrays oriented perpendicular to the axis of cell elongation to limit anisotropic cell growth during petal development, probably by triggering ARAC4/ROP2 and ARAC3/ROP6 activity. Promotes polarized growth and cell-cell adhesion in the leaf epidermis probably by promoting the formation of endoplasmic reticulum (ER) exit site (ERES) and/or trafficking between the ER and Golgi. Triggers ARAC3/ROP6 activation required for auxin-mediated inhibition of PIN2 internalization during gravitropic responses (, PubMed:22683260). In Arabidopsis thaliana (Mouse-ear cress), this protein is Guanine nucleotide exchange factor SPIKE 1.